The primary structure comprises 73 residues: Acyl carrier protein homolog (73 aa).

Positions 1-72 (MAIKEWIITQ…DIIVLIEQKS (72 aa)) constitute a Carrier domain. The residue at position 32 (Ser-32) is an O-(pantetheine 4'-phosphoryl)serine.

4'-phosphopantetheine is transferred from CoA to a specific serine of the apo-ACP-like protein.

It participates in lipid metabolism; fatty acid biosynthesis. In terms of biological role, carrier of the growing fatty acid chain in fatty acid biosynthesis. The sequence is that of Acyl carrier protein homolog from Mycoplasmopsis pulmonis (strain UAB CTIP) (Mycoplasma pulmonis).